We begin with the raw amino-acid sequence, 123 residues long: MLPLCLTFLSFFLSLGGSFKAVMTKEEADGTTEAAACLFWIFNWTVTLIPLNSLVALAISSPTFFGDKPNGPIFGAKAAEAPTSPPTALKYKYLTSFGSNFGGILTIDLSFYWALGVALTGSK.

The N-terminal stretch at 1-24 (MLPLCLTFLSFFLSLGGSFKAVMT) is a signal peptide. Helical transmembrane passes span 39–59 (FWIF…ALAI) and 101–121 (FGGI…ALTG).

Its subcellular location is the membrane. This is an uncharacterized protein from Saccharomyces cerevisiae (strain ATCC 204508 / S288c) (Baker's yeast).